The chain runs to 447 residues: T-box transcription factor TBX20 (447 aa).

A disordered region spans residues 62–81; the sequence is DAHGEFGGGSGSSPSSSSLC. The T-box DNA-binding region spans 109-288; sequence LWDKFHELGT…SNPFAKGFRD (180 aa). Residues 316 to 340 form a disordered region; it reads TYGGEEDVLGDESQTTPNRGSAFTT. The span at 327–340 shows a compositional bias: polar residues; sequence ESQTTPNRGSAFTT.

It is found in the nucleus. Functionally, acts as a transcriptional activator and repressor required for cardiac development and may have key roles in the maintenance of functional and structural phenotypes in adult heart. The polypeptide is T-box transcription factor TBX20 (TBX20) (Homo sapiens (Human)).